A 337-amino-acid chain; its full sequence is Ketol-acid reductoisomerase (NADP(+)) (337 aa).

One can recognise a KARI N-terminal Rossmann domain in the interval valine 3–threonine 183. NADP(+)-binding positions include tyrosine 26 to glutamine 29, lysine 49, serine 52, serine 54, and aspartate 84 to glutamine 87. Histidine 109 is a catalytic residue. An NADP(+)-binding site is contributed by glycine 135. Residues threonine 184–valine 329 form the KARI C-terminal knotted domain. Residues aspartate 192, glutamate 196, glutamate 228, and glutamate 232 each coordinate Mg(2+). Serine 253 provides a ligand contact to substrate.

Belongs to the ketol-acid reductoisomerase family. Requires Mg(2+) as cofactor.

It carries out the reaction (2R)-2,3-dihydroxy-3-methylbutanoate + NADP(+) = (2S)-2-acetolactate + NADPH + H(+). The catalysed reaction is (2R,3R)-2,3-dihydroxy-3-methylpentanoate + NADP(+) = (S)-2-ethyl-2-hydroxy-3-oxobutanoate + NADPH + H(+). Its pathway is amino-acid biosynthesis; L-isoleucine biosynthesis; L-isoleucine from 2-oxobutanoate: step 2/4. It participates in amino-acid biosynthesis; L-valine biosynthesis; L-valine from pyruvate: step 2/4. Involved in the biosynthesis of branched-chain amino acids (BCAA). Catalyzes an alkyl-migration followed by a ketol-acid reduction of (S)-2-acetolactate (S2AL) to yield (R)-2,3-dihydroxy-isovalerate. In the isomerase reaction, S2AL is rearranged via a Mg-dependent methyl migration to produce 3-hydroxy-3-methyl-2-ketobutyrate (HMKB). In the reductase reaction, this 2-ketoacid undergoes a metal-dependent reduction by NADPH to yield (R)-2,3-dihydroxy-isovalerate. The polypeptide is Ketol-acid reductoisomerase (NADP(+)) (Rhodococcus jostii (strain RHA1)).